The chain runs to 255 residues: Taurine import ATP-binding protein TauB (255 aa).

The ABC transporter domain maps to 2–229 (LQISHLYADY…RFVAGESSRS (228 aa)). Residue 34 to 41 (GPSGCGKT) participates in ATP binding.

This sequence belongs to the ABC transporter superfamily. Taurine importer (TC 3.A.1.17.1) family. In terms of assembly, the complex is composed of two ATP-binding proteins (TauB), two transmembrane proteins (TauC) and a solute-binding protein (TauA).

The protein resides in the cell inner membrane. The catalysed reaction is taurine(out) + ATP + H2O = taurine(in) + ADP + phosphate + H(+). Part of the ABC transporter complex TauABC involved in taurine import. Responsible for energy coupling to the transport system. This Escherichia coli (strain K12) protein is Taurine import ATP-binding protein TauB.